A 743-amino-acid chain; its full sequence is Tegument protein UL46 homolog (743 aa).

Disordered stretches follow at residues 437 to 481 (GCPP…VSSA), 522 to 590 (HQRS…SGYM), and 693 to 743 (RVRL…VSSL). Low complexity predominate over residues 526–552 (DSSSSDNSSCSSTETEYITISSTPSPT). Polar residues-rich tracts occupy residues 573–586 (QPANTVSEYSSPAN) and 697–716 (GTTTPTSANEATEKYTTPSS). Residues 722–743 (RTLSTSESPESSPEQQERVSSL) show a composition bias toward low complexity.

It belongs to the herpesviridae HHV-1 VP11/12 protein family. In terms of assembly, interacts with VP16.

It is found in the virion tegument. The protein localises to the host cell membrane. Abundant tegument protein. Trans-activates the immediate early genes. This chain is Tegument protein UL46 homolog, found in Equus caballus (Horse).